Reading from the N-terminus, the 684-residue chain is Glycine--tRNA ligase beta subunit (684 aa).

It belongs to the class-II aminoacyl-tRNA synthetase family. In terms of assembly, tetramer of two alpha and two beta subunits.

The protein localises to the cytoplasm. The catalysed reaction is tRNA(Gly) + glycine + ATP = glycyl-tRNA(Gly) + AMP + diphosphate. The chain is Glycine--tRNA ligase beta subunit from Stutzerimonas stutzeri (strain A1501) (Pseudomonas stutzeri).